The sequence spans 439 residues: Ornithine aminotransferase, mitochondrial (439 aa).

The N-terminal 25 residues, 1–25, are a transit peptide targeting the mitochondrion; it reads MLSKLASLQTIAALRRGVHTSVASA. N6-acetyllysine is present on residues K49 and K66. N6-succinyllysine is present on K102. K107 carries the N6-acetyllysine; alternate modification. The residue at position 107 (K107) is an N6-succinyllysine; alternate. Position 292 is an N6-(pyridoxal phosphate)lysine (K292). K362 bears the N6-acetyllysine; alternate mark. At K362 the chain carries N6-succinyllysine; alternate. N6-acetyllysine is present on residues K386 and K392. K405 carries the post-translational modification N6-acetyllysine; alternate. N6-succinyllysine; alternate is present on K405. K421 carries the N6-acetyllysine modification.

It belongs to the class-III pyridoxal-phosphate-dependent aminotransferase family. Homohexamer. The cofactor is pyridoxal 5'-phosphate.

The protein localises to the mitochondrion matrix. It catalyses the reaction L-ornithine + 2-oxoglutarate = L-glutamate 5-semialdehyde + L-glutamate. The protein operates within amino-acid biosynthesis; L-proline biosynthesis; L-glutamate 5-semialdehyde from L-ornithine: step 1/1. In terms of biological role, catalyzes the reversible interconversion of L-ornithine and 2-oxoglutarate to L-glutamate semialdehyde and L-glutamate. The polypeptide is Ornithine aminotransferase, mitochondrial (Oat) (Mus musculus (Mouse)).